The primary structure comprises 65 residues: Small, acid-soluble spore protein Tlp (65 aa).

Belongs to the Tlp family.

Its subcellular location is the spore core. In Bacillus anthracis (strain A0248), this protein is Small, acid-soluble spore protein Tlp.